The following is a 409-amino-acid chain: Peptidase T (409 aa).

Histidine 79 contributes to the Zn(2+) binding site. Aspartate 81 is a catalytic residue. Zn(2+) is bound at residue aspartate 140. Catalysis depends on glutamate 174, which acts as the Proton acceptor. Glutamate 175, aspartate 197, and histidine 379 together coordinate Zn(2+).

It belongs to the peptidase M20B family. Requires Zn(2+) as cofactor.

It localises to the cytoplasm. It catalyses the reaction Release of the N-terminal residue from a tripeptide.. In terms of biological role, cleaves the N-terminal amino acid of tripeptides. This Lysinibacillus sphaericus (strain C3-41) protein is Peptidase T.